Consider the following 237-residue polypeptide: Uridylate kinase (237 aa).

Residue 9–12 (KLSG) participates in ATP binding. The segment at 17–22 (GTQGYG) is involved in allosteric activation by GTP. G51 provides a ligand contact to UMP. Residues G52 and R56 each contribute to the ATP site. Residues D71 and 132–139 (CGNPFFTT) each bind UMP. Residues T159, Y165, and D168 each contribute to the ATP site.

It belongs to the UMP kinase family. As to quaternary structure, homohexamer.

It localises to the cytoplasm. It catalyses the reaction UMP + ATP = UDP + ADP. Its pathway is pyrimidine metabolism; CTP biosynthesis via de novo pathway; UDP from UMP (UMPK route): step 1/1. Allosterically activated by GTP. Inhibited by UTP. Its function is as follows. Catalyzes the reversible phosphorylation of UMP to UDP. The chain is Uridylate kinase from Parasynechococcus marenigrum (strain WH8102).